A 121-amino-acid polypeptide reads, in one-letter code: Protein GAT4 (121 aa).

Residues 29-48 (EAQHGLPRNADSQPARPRTG) are disordered. The segment at 53–79 (CGQCGEIKTSLQWREGPNGAACLCNAC) adopts a GATA-type zinc-finger fold.

The polypeptide is Protein GAT4 (GAT4) (Saccharomyces cerevisiae (strain ATCC 204508 / S288c) (Baker's yeast)).